The primary structure comprises 681 residues: Ribosomal L1 domain-containing protein CG13096 (681 aa).

Disordered stretches follow at residues 1-248 (MVKV…AKSK) and 579-681 (DAAP…DDEE). Phosphoserine occurs at positions 15 and 17. The span at 54 to 74 (VKKDAIKKEPEVSKKGAEKKQ) shows a compositional bias: basic and acidic residues. Ser89 carries the phosphoserine modification. The segment covering 103-112 (KPAASGAPVG) has biased composition (low complexity). The residue at position 128 (Ser128) is a Phosphoserine. The segment covering 189–217 (QAAPAKPAKAQPASQLQKKAKAVQKLSKP) has biased composition (low complexity). Over residues 599 to 610 (KESSSEGAKADA) the composition is skewed to basic and acidic residues. Acidic residues predominate over residues 611 to 681 (ESDEEEEVEE…EDDDDDDDEE (71 aa)).

It belongs to the universal ribosomal protein uL1 family. Highly divergent.

This Drosophila melanogaster (Fruit fly) protein is Ribosomal L1 domain-containing protein CG13096.